Consider the following 85-residue polypeptide: MKLFLLLLISASMLIDGLVNADGYIRGSNGCKVSCLWGNEGCNKECGAYGASYGYCWTWGLACWCEGLPDDKTWKSESNTCGGKK.

A signal peptide spans Met-1 to Ala-21. An LCN-type CS-alpha/beta domain is found at Asp-22 to Gly-82. 4 cysteine pairs are disulfide-bonded: Cys-31–Cys-81, Cys-35–Cys-56, Cys-42–Cys-63, and Cys-46–Cys-65. Gly-82 carries the post-translational modification Glycine amide.

The protein belongs to the long (4 C-C) scorpion toxin superfamily. Sodium channel inhibitor family. Beta subfamily. As to expression, expressed by the venom gland.

It localises to the secreted. Its function is as follows. Depressant insect toxins cause a transient contraction paralysis followed by a slow flaccid paralysis. They bind voltage-independently to sodium channels (Nav) and block action potentials, primarily by depolarizing the axonal membrane and suppressing the sodium current. This Olivierus martensii (Manchurian scorpion) protein is Depressant insect toxin BmK ITa1.